A 152-amino-acid chain; its full sequence is Desiccation protectant protein Lea14 homolog (152 aa).

It belongs to the LEA type 2 family.

This Glycine max (Soybean) protein is Desiccation protectant protein Lea14 homolog.